Here is a 388-residue protein sequence, read N- to C-terminus: MNLHEYQAKALFAEYGLPVSEGFACDTAQEAVEAAGHIGGDMWVVKCQVHAGGRGKAGGVKVTGDKEEIRAFAEHWLGKNLVTYQTDEKGQPVAKILVESCTDIANELYLGAVVDRSTRRVVFMASTEGGVEIETVAEETPELIHKAIIDPLTGPQPYQARDLGFKLGLNPTQMKQFTKVFMGLAKMFEDHDFALLEINPLVITDEGNIHCLDGKIGIDGNALFRQPKIRDMHDPSQDDAREAHAAKFELNYVALDGNVGCMVNGAGLAMGTMDIVNLHGGKPANFLDVGGGATKERVAEAFKIILSDSNVKAVLVNIFGGIVRCDMIAEGIIGAVKEVGVEVPVVVRLEGTNADLGREVLANSDLDIIAATSLTDAAEQVVKAAEGK.

The region spanning 9 to 244 is the ATP-grasp domain; that stretch reads KALFAEYGLP…PSQDDAREAH (236 aa). ATP contacts are provided by residues lysine 46, 53–55, glutamate 99, threonine 102, and glutamate 107; that span reads GRG. Mg(2+) is bound by residues asparagine 199 and aspartate 213. Substrate contacts are provided by residues asparagine 264 and 321–323; that span reads GIV.

It belongs to the succinate/malate CoA ligase beta subunit family. In terms of assembly, heterotetramer of two alpha and two beta subunits. Mg(2+) is required as a cofactor.

It carries out the reaction succinate + ATP + CoA = succinyl-CoA + ADP + phosphate. The enzyme catalyses GTP + succinate + CoA = succinyl-CoA + GDP + phosphate. The protein operates within carbohydrate metabolism; tricarboxylic acid cycle; succinate from succinyl-CoA (ligase route): step 1/1. Succinyl-CoA synthetase functions in the citric acid cycle (TCA), coupling the hydrolysis of succinyl-CoA to the synthesis of either ATP or GTP and thus represents the only step of substrate-level phosphorylation in the TCA. The beta subunit provides nucleotide specificity of the enzyme and binds the substrate succinate, while the binding sites for coenzyme A and phosphate are found in the alpha subunit. This chain is Succinate--CoA ligase [ADP-forming] subunit beta, found in Shewanella pealeana (strain ATCC 700345 / ANG-SQ1).